We begin with the raw amino-acid sequence, 167 residues long: SsrA-binding protein (167 aa).

A disordered region spans residues 139 to 167; the sequence is QAHDKRHAEKEREWQRDKQRIMRAHNRNA. Positions 144–158 are enriched in basic and acidic residues; the sequence is RHAEKEREWQRDKQR.

Belongs to the SmpB family.

Its subcellular location is the cytoplasm. In terms of biological role, required for rescue of stalled ribosomes mediated by trans-translation. Binds to transfer-messenger RNA (tmRNA), required for stable association of tmRNA with ribosomes. tmRNA and SmpB together mimic tRNA shape, replacing the anticodon stem-loop with SmpB. tmRNA is encoded by the ssrA gene; the 2 termini fold to resemble tRNA(Ala) and it encodes a 'tag peptide', a short internal open reading frame. During trans-translation Ala-aminoacylated tmRNA acts like a tRNA, entering the A-site of stalled ribosomes, displacing the stalled mRNA. The ribosome then switches to translate the ORF on the tmRNA; the nascent peptide is terminated with the 'tag peptide' encoded by the tmRNA and targeted for degradation. The ribosome is freed to recommence translation, which seems to be the essential function of trans-translation. The polypeptide is SsrA-binding protein (Xylella fastidiosa (strain M12)).